The following is a 51-amino-acid chain: SLVELGKMILQETGKNPVTSYGAYGCNCGVLGHGKPKDATDRCCYVHKCCY.

A disulfide bridge links Cys28 with Cys44.

As to quaternary structure, monomer. As to expression, expressed by the venom gland.

It localises to the secreted. Its function is as follows. Snake venom phospholipase A2 homolog that lacks enzymatic activity. Shows high myotoxic activity, neutrophile activation (demonstrated by activation induction of IL-1beta production), slight cytotoxicity against Jurkat (leukemia T) and SK-BR-3 (breast adenocarcinoma) tumor cell lines, and slight antiparasitic activity against promastigote forms of Leishmania amazonensis. A model of myotoxic mechanism has been proposed: an apo Lys49-PLA2 is activated by the entrance of a hydrophobic molecule (e.g. fatty acid) at the hydrophobic channel of the protein leading to a reorientation of a monomer. This reorientation causes a transition between 'inactive' to 'active' states, causing alignment of C-terminal and membrane-docking sites (MDoS) side-by-side and putting the membrane-disruption sites (MDiS) in the same plane, exposed to solvent and in a symmetric position for both monomers. The MDoS region stabilizes the toxin on membrane by the interaction of charged residues with phospholipid head groups. Subsequently, the MDiS region destabilizes the membrane with penetration of hydrophobic residues. This insertion causes a disorganization of the membrane, allowing an uncontrolled influx of ions (i.e. calcium and sodium), and eventually triggering irreversible intracellular alterations and cell death. The chain is Basic phospholipase A2 homolog BmatTX-I from Bothrops mattogrossensis (Pitviper).